The following is a 314-amino-acid chain: Acetyl-coenzyme A carboxylase carboxyl transferase subunit alpha (314 aa).

The region spanning Glu-32 to Glu-289 is the CoA carboxyltransferase C-terminal domain.

This sequence belongs to the AccA family. In terms of assembly, acetyl-CoA carboxylase is a heterohexamer composed of biotin carboxyl carrier protein (AccB), biotin carboxylase (AccC) and two subunits each of ACCase subunit alpha (AccA) and ACCase subunit beta (AccD).

The protein resides in the cytoplasm. The catalysed reaction is N(6)-carboxybiotinyl-L-lysyl-[protein] + acetyl-CoA = N(6)-biotinyl-L-lysyl-[protein] + malonyl-CoA. It functions in the pathway lipid metabolism; malonyl-CoA biosynthesis; malonyl-CoA from acetyl-CoA: step 1/1. Its function is as follows. Component of the acetyl coenzyme A carboxylase (ACC) complex. First, biotin carboxylase catalyzes the carboxylation of biotin on its carrier protein (BCCP) and then the CO(2) group is transferred by the carboxyltransferase to acetyl-CoA to form malonyl-CoA. This is Acetyl-coenzyme A carboxylase carboxyl transferase subunit alpha from Staphylococcus saprophyticus subsp. saprophyticus (strain ATCC 15305 / DSM 20229 / NCIMB 8711 / NCTC 7292 / S-41).